The following is a 769-amino-acid chain: Apoptotic enhancer 1 protein (769 aa).

3 disordered regions span residues 69–88 (PVRVVAQPPPPHPQALSQQY), 265–396 (SVEP…LDES), and 451–518 (PQLP…RSDD). Over residues 275–284 (QQQQPSPQMM) the composition is skewed to low complexity. Basic and acidic residues predominate over residues 285 to 295 (KSEEFSEKRDL). Over residues 339 to 353 (STDPHSNHSSPSTSS) the composition is skewed to low complexity. Polar residues-rich tracts occupy residues 354–378 (QKAPTLITFSPPSFEQKINSSTMTR), 453–467 (LPTSQEEPSAITSET), and 474–491 (NSESKQVATSSDSTNNLE). 2 ANK repeats span residues 585–617 (EGITALHNAICAGHYEIVRFLIENDADVNAQDS) and 618–652 (DGWTPLHCAASCNNLPMVRQLVEGGGCVLASTLSD). An SH3 domain is found at 684 to 746 (INTGKVYAAY…PRTYLALYPS (63 aa)).

It belongs to the iASPP family. As to quaternary structure, interacts with cep-1/p53; the interaction inhibits pro-apoptotic activity of cep-1.

The protein resides in the nucleus. Its function is as follows. Negetively regulates apoptosis via its interaction with cep-1. The polypeptide is Apoptotic enhancer 1 protein (Caenorhabditis elegans).